A 361-amino-acid polypeptide reads, in one-letter code: Chorismate synthase (361 aa).

NADP(+) is bound by residues Arg-48 and Arg-54. Residues 125 to 127, 238 to 239, Gly-278, 293 to 297, and Arg-319 contribute to the FMN site; these read RSS, NA, and KPTSS.

It belongs to the chorismate synthase family. In terms of assembly, homotetramer. Requires FMNH2 as cofactor.

The catalysed reaction is 5-O-(1-carboxyvinyl)-3-phosphoshikimate = chorismate + phosphate. It participates in metabolic intermediate biosynthesis; chorismate biosynthesis; chorismate from D-erythrose 4-phosphate and phosphoenolpyruvate: step 7/7. Functionally, catalyzes the anti-1,4-elimination of the C-3 phosphate and the C-6 proR hydrogen from 5-enolpyruvylshikimate-3-phosphate (EPSP) to yield chorismate, which is the branch point compound that serves as the starting substrate for the three terminal pathways of aromatic amino acid biosynthesis. This reaction introduces a second double bond into the aromatic ring system. The polypeptide is Chorismate synthase (Vibrio vulnificus (strain YJ016)).